Here is a 552-residue protein sequence, read N- to C-terminus: Cation transporter HKT1;1 (552 aa).

The Cytoplasmic segment spans residues 1–70 (MHPPSLVLDT…QSYSFLVCKS (70 aa)). 2 consecutive transmembrane segments (helical) span residues 71-91 (NPLVVQLVYFVIISFAGFLAL) and 133-153 (LWVLILLMLMGGEVFTSMLGL). Over 154–221 (YFNNANANRN…TYNPCAVLVR (68 aa)) the chain is Cytoplasmic. Transmembrane regions (helical) follow at residues 222-242 (IVTGYFVATVISSSVIIIIYF) and 291-311 (VLLLLVIPQILAGNTLFSPLL). Residues 312 to 348 (RLCVWVLGKVSGKAEYAYILQHPGETGYKHLHVRRNS) lie on the Cytoplasmic side of the membrane. Helical transmembrane passes span 349-369 (VYIVLSVTGLILLQVMFICSF) and 402-422 (ILDISTLSPSTLLLFAVVMYL). The Cytoplasmic segment spans residues 423–448 (PSDASFLTANADNQPLTDKKTNSISR). 2 helical membrane-spanning segments follow: residues 449-471 (ALWRNFTVNKLSCLAMFTFLACI) and 524-544 (GFVGRWTEEGKLIVILVMFLG). Over 545–552 (RLKEFILK) the chain is Cytoplasmic.

Belongs to the TrkH potassium transport family. HKT (TC 2.A.38.3) subfamily. In terms of tissue distribution, expressed in shoots. In roots, expressed in epidermis, exodermis, cortex, and sieve elements and companion cells of phloem. In mature leaves, expressed in large highly vacuolated cells of the adaxial epidermis, phloem and xylem.

It localises to the membrane. It catalyses the reaction Na(+)(in) = Na(+)(out). In terms of biological role, functions as a low-affinity sodium transporter. The polypeptide is Cation transporter HKT1;1 (Oryza sativa subsp. japonica (Rice)).